Consider the following 444-residue polypeptide: Nuclear distribution protein PAC1 (444 aa).

A coiled-coil region spans residues 59–87 (TAIARLQRRIMSLEQNIRDLREASIEMNA). WD repeat units follow at residues 113–152 (TLESPVTGVRLHPELAVVFVSTEQGRLHCFDLMDITLPLA), 156–199 (AHTR…KLLR), 204–251 (HEHV…CLKS), 254–293 (PHSDWVRCLDVYGEFLITGCQDSTLRLTHWPSGNGLSVGL), 307–347 (SLQD…RLPQ), 367–406 (GHDSWIKAVGSRGDHVFTASDDKSVICWNWTNGQCLKKWN), and 408–444 (IHQGFVTCIDLDDSNHPLKRKIMVTGGIDCKCHIFMQ).

This sequence belongs to the WD repeat LIS1/nudF family. In terms of assembly, self-associates. Interacts with NDL1 and dynein.

It localises to the cytoplasm. Its subcellular location is the cytoskeleton. It is found in the spindle pole. Functionally, positively regulates the activity of the minus-end directed microtubule motor protein dynein. Plays a central role in positioning the mitotic spindle at the bud neck during cell division. Targets cytoplasmic dynein to microtubule plus ends, thereby promoting dynein-mediated microtubule sliding along the bud cortex and consequently the movement of the mitotic spindle to the bud neck. In Zygosaccharomyces rouxii (strain ATCC 2623 / CBS 732 / NBRC 1130 / NCYC 568 / NRRL Y-229), this protein is Nuclear distribution protein PAC1.